The chain runs to 81 residues: Defensin-like protein 130 (81 aa).

A signal peptide spans Met1–Thr21. 4 cysteine pairs are disulfide-bonded: Cys32–Cys81, Cys41–Cys63, Cys46–Cys75, and Cys50–Cys77.

This sequence belongs to the DEFL family.

It localises to the secreted. The protein is Defensin-like protein 130 (LCR28) of Arabidopsis thaliana (Mouse-ear cress).